The primary structure comprises 228 residues: Translin (228 aa).

Residues 86-90 (RFHEH) form a DNA/RNA binding region. The tract at residues 177–198 (LDSGFRLLNLKNDSLRKRYDGL) is leucine-zipper. N6-acetyllysine is present on K187. Residue S190 is modified to Phosphoserine. An N6-acetyllysine modification is found at K199.

This sequence belongs to the translin family. As to quaternary structure, ring-shaped heterooctamer of six TSN and two TSNAX subunits, DNA/RNA binding occurs inside the ring.

Its subcellular location is the cytoplasm. It is found in the nucleus. DNA-binding protein that specifically recognizes consensus sequences at the breakpoint junctions in chromosomal translocations, mostly involving immunoglobulin (Ig)/T-cell receptor gene segments. Seems to recognize single-stranded DNA ends generated by staggered breaks occurring at recombination hot spots. Functionally, exhibits both single-stranded and double-stranded endoribonuclease activity. May act as an activator of RNA-induced silencing complex (RISC) by facilitating endonucleolytic cleavage of the siRNA passenger strand. The polypeptide is Translin (TSN) (Cricetulus griseus (Chinese hamster)).